A 675-amino-acid polypeptide reads, in one-letter code: Pescadillo homolog (675 aa).

The disordered stretch occupies residues 309-331; the sequence is AGLDEAKEEPAAETTEESSETID. A BRCT domain is found at 352 to 471; that stretch reads EAGSLFAPFT…RLVRPDLYAP (120 aa). The tract at residues 475 to 675 is disordered; the sequence is LPPHLSPWVK…RRKLEKGAAK (201 aa). The span at 498–518 shows a compositional bias: acidic residues; it reads EQEEEGEAELDEDSDEEMEEA. The span at 519-530 shows a compositional bias: basic and acidic residues; sequence TSDKKAEAKADV. Acidic residues-rich tracts occupy residues 532-541 and 549-580; these read SESEDEDESV and GTDD…DEEE. Positions 551-675 form a coiled coil; sequence DDDESESEDE…RRKLEKGAAK (125 aa). Residues 581-591 are compositionally biased toward basic and acidic residues; sequence AARTQHQKELE. A compositionally biased stretch (basic residues) spans 611–623; that stretch reads KKASQAKKIAAKK. Over residues 624–634 the composition is skewed to basic and acidic residues; that stretch reads RKEEEELERQK.

This sequence belongs to the pescadillo family. Component of the NOP7 complex, composed of erb1, nop7 and ytm1. The complex is held together by erb1, which interacts with nop7 via its N-terminal domain and with ytm1 via a high-affinity interaction between the seven-bladed beta-propeller domains of the 2 proteins. The NOP7 complex associates with the 66S pre-ribosome.

The protein localises to the nucleus. It localises to the nucleolus. Its subcellular location is the nucleoplasm. Its function is as follows. Component of the NOP7 complex, which is required for maturation of the 25S and 5.8S ribosomal RNAs and formation of the 60S ribosome. This Aspergillus fumigatus (strain CBS 144.89 / FGSC A1163 / CEA10) (Neosartorya fumigata) protein is Pescadillo homolog (nop7).